The primary structure comprises 1150 residues: ATP-dependent helicase/deoxyribonuclease subunit B (1150 aa).

8-15 (GRAGSGKS) serves as a coordination point for ATP. The [4Fe-4S] cluster site is built by Cys786, Cys1106, Cys1109, and Cys1115.

This sequence belongs to the helicase family. AddB/RexB type 1 subfamily. In terms of assembly, heterodimer of AddA and AddB. The cofactor is Mg(2+). [4Fe-4S] cluster is required as a cofactor.

Functionally, the heterodimer acts as both an ATP-dependent DNA helicase and an ATP-dependent, dual-direction single-stranded exonuclease. Recognizes the chi site generating a DNA molecule suitable for the initiation of homologous recombination. The AddB subunit has 5' -&gt; 3' nuclease activity but not helicase activity. The polypeptide is ATP-dependent helicase/deoxyribonuclease subunit B (Clostridium botulinum (strain Hall / ATCC 3502 / NCTC 13319 / Type A)).